The following is a 61-amino-acid chain: Metallothionein-1 (61 aa).

At methionine 1 the chain carries N-acetylmethionine. The segment at methionine 1–cysteine 29 is beta. A divalent metal cation is bound by residues cysteine 5, cysteine 7, cysteine 13, cysteine 15, cysteine 19, cysteine 21, cysteine 24, cysteine 26, cysteine 29, cysteine 33, cysteine 34, cysteine 36, cysteine 37, cysteine 41, cysteine 44, cysteine 48, cysteine 50, cysteine 57, cysteine 59, and cysteine 60. Positions lysine 30–alanine 61 are alpha.

This sequence belongs to the metallothionein superfamily. Type 1 family.

In terms of biological role, metallothioneins have a high content of cysteine residues that bind various heavy metals; these proteins are transcriptionally regulated by both heavy metals and glucocorticoids. This is Metallothionein-1 (MT1) from Cricetulus griseus (Chinese hamster).